Consider the following 320-residue polypeptide: Protoheme IX farnesyltransferase 1 (320 aa).

The next 9 membrane-spanning stretches (helical) occupy residues 34–54 (GIII…FASA), 58–78 (LTGL…AFVM), 112–132 (AMIL…LYSL), 135–155 (LTAF…TVWV), 160–180 (VWST…GYCA), 189–209 (AVLL…AIGI), 234–254 (IKMM…PFSL), 255–275 (GTGH…GIWI), and 299–319 (LIYF…MFLI).

The protein belongs to the UbiA prenyltransferase family. Protoheme IX farnesyltransferase subfamily. As to quaternary structure, interacts with CtaA.

It localises to the cell membrane. It carries out the reaction heme b + (2E,6E)-farnesyl diphosphate + H2O = Fe(II)-heme o + diphosphate. Its pathway is porphyrin-containing compound metabolism; heme O biosynthesis; heme O from protoheme: step 1/1. In terms of biological role, converts heme B (protoheme IX) to heme O by substitution of the vinyl group on carbon 2 of heme B porphyrin ring with a hydroxyethyl farnesyl side group. The protein is Protoheme IX farnesyltransferase 1 (ctaB1) of Bacillus subtilis (strain 168).